The primary structure comprises 540 residues: MSKFSSKNINKTKVPESPVVLAILDGWGHREENLDNAIKNANTPIMDSLWHAYPHTLINASGADVGLPNGQMGNSEVGHLTIGSGRIIQQELVRITNVVKNNQLTQVNELKEMANSIKKKKGTLHITGLCSDGGVHSHIDHLLGLIKWASEEHIEKVAIHIITDGRDTPAKSAYKYIRQIEDCIKKFKVGEIASICGRYWIMDRNLIWERTEKAFVNLTDPNGKKIDISPADYLNKSYNANITDEFLEPIRISKDFLKDEDSLICFNFRPDRARQIIKALSEKEFDNFKRKSIPDVDILTFTQYEANLPVKIAFPPESLNNFIGQIVSENGLKQYRTAETEKYPHVTYFFNGGVEVPSPGEQRHLIPSPRVATYDMAPEMSAEELTISCSNAIKTGQYSFVVINFANPDMVGHTGNMAAAIKAIETVDRCIGKIVNATGEMGGSILITADHGNAELMKGPDGEPWTAHTINKVPLIFIEGEKRKIPNMGNEIYLRENAGLADIAPTLLQLLNLPIPKEMTGKSLIKEIELKGFNKVVQHV.

Residues D25 and S75 each contribute to the Mn(2+) site. The active-site Phosphoserine intermediate is S75. Residues H136, 166-167, R198, R204, 269-272, and K342 each bind substrate; these read RD and RPDR. Residues D409, H413, D450, H451, and H468 each contribute to the Mn(2+) site.

This sequence belongs to the BPG-independent phosphoglycerate mutase family. As to quaternary structure, monomer. Mn(2+) is required as a cofactor.

It carries out the reaction (2R)-2-phosphoglycerate = (2R)-3-phosphoglycerate. It functions in the pathway carbohydrate degradation; glycolysis; pyruvate from D-glyceraldehyde 3-phosphate: step 3/5. In terms of biological role, catalyzes the interconversion of 2-phosphoglycerate and 3-phosphoglycerate. The chain is 2,3-bisphosphoglycerate-independent phosphoglycerate mutase from Prochlorococcus marinus subsp. pastoris (strain CCMP1986 / NIES-2087 / MED4).